The chain runs to 356 residues: MSLNSFGHIFRFTTWGESHGPALGAVVDGCPPGLALTEAQIQPFLDARRPGQSRFTTQRQEPDQVRILSGVFEGRTTGTPISLMIENVDQRSKDYGDVAKAYRPGHADYAYDAKYGFRDYRGGGRSSARETAARVAAGAVARLVIPEVSILAWVSEIGGDRIDMDHFDAAEIARNPFFCPDSWAAARWEKLVDDARKSGSSLGAVVECVATGVPAGWGAPLYAKLDAELAHAMMGINAVKGVEIGDGFAAARNTGEGNADPMRPGAGVPEFLANHAGGIAGGISTGQPVTVRVAFKPTSSILTPMPTITREGEATELLTKGRHDPCVGIRGVPVVEAMMALVLADQKLLHRGQCGG.

Positions 48 and 54 each coordinate NADP(+). FMN contacts are provided by residues 125–127 (RSS), 237–238 (NA), G281, 296–300 (KPTSS), and R322.

Belongs to the chorismate synthase family. As to quaternary structure, homotetramer. The cofactor is FMNH2.

The catalysed reaction is 5-O-(1-carboxyvinyl)-3-phosphoshikimate = chorismate + phosphate. Its pathway is metabolic intermediate biosynthesis; chorismate biosynthesis; chorismate from D-erythrose 4-phosphate and phosphoenolpyruvate: step 7/7. Catalyzes the anti-1,4-elimination of the C-3 phosphate and the C-6 proR hydrogen from 5-enolpyruvylshikimate-3-phosphate (EPSP) to yield chorismate, which is the branch point compound that serves as the starting substrate for the three terminal pathways of aromatic amino acid biosynthesis. This reaction introduces a second double bond into the aromatic ring system. In Novosphingobium aromaticivorans (strain ATCC 700278 / DSM 12444 / CCUG 56034 / CIP 105152 / NBRC 16084 / F199), this protein is Chorismate synthase.